A 193-amino-acid chain; its full sequence is Adenine phosphoribosyltransferase (193 aa).

Belongs to the purine/pyrimidine phosphoribosyltransferase family. Homodimer.

It localises to the cytoplasm. It catalyses the reaction AMP + diphosphate = 5-phospho-alpha-D-ribose 1-diphosphate + adenine. Its pathway is purine metabolism; AMP biosynthesis via salvage pathway; AMP from adenine: step 1/1. In terms of biological role, catalyzes a salvage reaction resulting in the formation of AMP, that is energically less costly than de novo synthesis. In Bifidobacterium longum (strain DJO10A), this protein is Adenine phosphoribosyltransferase.